Reading from the N-terminus, the 546-residue chain is Immunoglobulin-like domain-containing receptor 1 (546 aa).

A signal peptide spans 1–23; the sequence is MAWPKLPAPWLLLCTWLPAGCLS. The Ig-like V-type domain occupies 24–162; sequence LLVTVQHTER…TSGDPDKEVK (139 aa). The Extracellular portion of the chain corresponds to 24–167; sequence LLVTVQHTER…DKEVKLIVLH (144 aa). A disulfide bond links C45 and C145. Residues 168–188 form a helical membrane-spanning segment; that stretch reads WLTVIFIILGALLLLLLIGVC. Topologically, residues 189-546 are cytoplasmic; that stretch reads WCQCCPQYCC…SSHSGRSVVI (358 aa). The disordered stretch occupies residues 399-546; it reads WSGRHRSSRL…SSHSGRSVVI (148 aa). Over residues 442 to 457 the composition is skewed to basic and acidic residues; that stretch reads RCQERPRRPSPRESTQ. Residues 458 to 467 are compositionally biased toward basic residues; the sequence is RHGRRRRHRS. 2 positions are modified to phosphoserine: S499 and S501. Positions 527–539 are enriched in basic and acidic residues; sequence GSVERRSEKDSSH.

This sequence belongs to the immunoglobulin superfamily. LISCH7 family. In terms of assembly, homooligomer. Interacts with MARVELD2 and OCLN; the interaction is required to recruit MARVELD2 to tricellular contacts. Interacts (via C-terminus) with TRA2A, TRA2B and SRSF1. Interacts with PLSCR1.

Its subcellular location is the cell membrane. The protein resides in the cell junction. It localises to the tight junction. It is found in the nucleus. The protein localises to the cytoplasm. In terms of biological role, maintains epithelial barrier function by recruiting MARVELD2/tricellulin to tricellular tight junctions (tTJs). Crucial for normal hearing by maintaining the structural and functional integrity of tTJs, which are critical for the survival of auditory neurosensory HCs. Mediates fatty acids and lipoproteins-stimulated CCK/cholecystokinin secretion in the small intestine. In the inner ear, may regulate alternative pre-mRNA splicing via binding to TRA2A, TRA2B and SRSF1. The sequence is that of Immunoglobulin-like domain-containing receptor 1 (ILDR1) from Pongo abelii (Sumatran orangutan).